A 1942-amino-acid polypeptide reads, in one-letter code: GREB1-like protein (1942 aa).

4 disordered regions span residues 76 to 101 (SSNS…YLQG), 235 to 306 (PFSN…GTKT), 325 to 373 (MDGR…HRSW), and 1123 to 1256 (TKTA…RTQV). A compositionally biased stretch (acidic residues) spans 81–90 (EDMDDEDDSD). Positions 237 to 253 (SNSASSSKPSSSSSLSS) are enriched in low complexity. Over residues 338–362 (NPLSTPSHGYRTTETGDSPASTAMS) the composition is skewed to polar residues. Basic and acidic residues predominate over residues 1127-1155 (TSREERPREGERSSGETAEHDDLPMELER). A compositionally biased stretch (low complexity) spans 1158–1171 (SNASAATRTSGSTT). Residues 1172 to 1202 (ENGVSSSSILDKPSSQSDPCGSRTMMDSCSS) show a composition bias toward polar residues. A compositionally biased stretch (low complexity) spans 1212–1248 (SQAPSSSSTSSFSSASSSSSSSSSPAAQRPSQSTQAP). A helical membrane pass occupies residues 1861-1881 (GVIFSGLLLYLCDSFVVSSLL).

The protein belongs to the GREB1 family.

Its subcellular location is the membrane. In terms of biological role, plays a major role in early metanephros development. This is GREB1-like protein (greb1l) from Danio rerio (Zebrafish).